Here is a 255-residue protein sequence, read N- to C-terminus: 4-hydroxy-tetrahydrodipicolinate reductase (255 aa).

NAD(+)-binding positions include Gly9–Met14, Gly89–Thr91, and Ala115–Phe118. His145 (proton donor/acceptor) is an active-site residue. Position 146 (His146) interacts with (S)-2,3,4,5-tetrahydrodipicolinate. Catalysis depends on Lys149, which acts as the Proton donor. A (S)-2,3,4,5-tetrahydrodipicolinate-binding site is contributed by Gly155–Thr156.

This sequence belongs to the DapB family.

It localises to the cytoplasm. The enzyme catalyses (S)-2,3,4,5-tetrahydrodipicolinate + NAD(+) + H2O = (2S,4S)-4-hydroxy-2,3,4,5-tetrahydrodipicolinate + NADH + H(+). It carries out the reaction (S)-2,3,4,5-tetrahydrodipicolinate + NADP(+) + H2O = (2S,4S)-4-hydroxy-2,3,4,5-tetrahydrodipicolinate + NADPH + H(+). Its pathway is amino-acid biosynthesis; L-lysine biosynthesis via DAP pathway; (S)-tetrahydrodipicolinate from L-aspartate: step 4/4. Functionally, catalyzes the conversion of 4-hydroxy-tetrahydrodipicolinate (HTPA) to tetrahydrodipicolinate. This Streptococcus thermophilus (strain CNRZ 1066) protein is 4-hydroxy-tetrahydrodipicolinate reductase.